The chain runs to 502 residues: Probable zinc metalloprotease MGG_02107 (502 aa).

An N-terminal signal peptide occupies residues 1–21; that stretch reads MRSPPGAVAALASVAAQLATA. Residues H182, D202, and E235 each coordinate Zn(2+). An N-linked (GlcNAc...) asparagine glycan is attached at N250. Position 262 (D262) interacts with Zn(2+). A disordered region spans residues 284–307; it reads QGGSPAGESKERAETRASIGGEND. Residues N375, N417, and N427 are each glycosylated (N-linked (GlcNAc...) asparagine). In terms of domain architecture, Fibronectin type-III spans 414–502; that stretch reads QVRNVTVDTS…KSPATMPFPG (89 aa).

Belongs to the peptidase M28 family. M28B subfamily. Zn(2+) is required as a cofactor.

It is found in the secreted. This is Probable zinc metalloprotease MGG_02107 from Pyricularia oryzae (strain 70-15 / ATCC MYA-4617 / FGSC 8958) (Rice blast fungus).